Consider the following 89-residue polypeptide: Small ribosomal subunit protein uS15 (89 aa).

It belongs to the universal ribosomal protein uS15 family. In terms of assembly, part of the 30S ribosomal subunit. Forms a bridge to the 50S subunit in the 70S ribosome, contacting the 23S rRNA.

In terms of biological role, one of the primary rRNA binding proteins, it binds directly to 16S rRNA where it helps nucleate assembly of the platform of the 30S subunit by binding and bridging several RNA helices of the 16S rRNA. Forms an intersubunit bridge (bridge B4) with the 23S rRNA of the 50S subunit in the ribosome. The protein is Small ribosomal subunit protein uS15 of Pelotomaculum thermopropionicum (strain DSM 13744 / JCM 10971 / SI).